The primary structure comprises 98 residues: NADH-ubiquinone oxidoreductase chain 4L (98 aa).

Helical transmembrane passes span 1 to 21, 29 to 49, and 61 to 81; these read MSLV…GLLM, SLLC…LMIL, and IILL…LVMV.

This sequence belongs to the complex I subunit 4L family. As to quaternary structure, core subunit of respiratory chain NADH dehydrogenase (Complex I) which is composed of 45 different subunits.

It localises to the mitochondrion inner membrane. It carries out the reaction a ubiquinone + NADH + 5 H(+)(in) = a ubiquinol + NAD(+) + 4 H(+)(out). In terms of biological role, core subunit of the mitochondrial membrane respiratory chain NADH dehydrogenase (Complex I) which catalyzes electron transfer from NADH through the respiratory chain, using ubiquinone as an electron acceptor. Part of the enzyme membrane arm which is embedded in the lipid bilayer and involved in proton translocation. The chain is NADH-ubiquinone oxidoreductase chain 4L (MT-ND4L) from Ovis aries (Sheep).